Reading from the N-terminus, the 938-residue chain is Isoleucine--tRNA ligase (938 aa).

Positions 58-68 (PYANGNIHIGH) match the 'HIGH' region motif. Residue Glu-563 participates in L-isoleucyl-5'-AMP binding. Positions 604-608 (KMSKS) match the 'KMSKS' region motif. Lys-607 provides a ligand contact to ATP. Positions 903, 906, 921, and 924 each coordinate Zn(2+).

Belongs to the class-I aminoacyl-tRNA synthetase family. IleS type 1 subfamily. In terms of assembly, monomer. Zn(2+) is required as a cofactor.

The protein resides in the cytoplasm. It catalyses the reaction tRNA(Ile) + L-isoleucine + ATP = L-isoleucyl-tRNA(Ile) + AMP + diphosphate. In terms of biological role, catalyzes the attachment of isoleucine to tRNA(Ile). As IleRS can inadvertently accommodate and process structurally similar amino acids such as valine, to avoid such errors it has two additional distinct tRNA(Ile)-dependent editing activities. One activity is designated as 'pretransfer' editing and involves the hydrolysis of activated Val-AMP. The other activity is designated 'posttransfer' editing and involves deacylation of mischarged Val-tRNA(Ile). The polypeptide is Isoleucine--tRNA ligase (Buchnera aphidicola subsp. Schizaphis graminum (strain Sg)).